A 101-amino-acid polypeptide reads, in one-letter code: Phosphoribosyl-AMP cyclohydrolase (101 aa).

Position 71 (D71) interacts with Mg(2+). Residue C72 participates in Zn(2+) binding. Mg(2+) contacts are provided by D73 and D75. 2 residues coordinate Zn(2+): C88 and C95.

Belongs to the PRA-CH family. In terms of assembly, homodimer. Mg(2+) serves as cofactor. Zn(2+) is required as a cofactor.

The protein resides in the cytoplasm. It carries out the reaction 1-(5-phospho-beta-D-ribosyl)-5'-AMP + H2O = 1-(5-phospho-beta-D-ribosyl)-5-[(5-phospho-beta-D-ribosylamino)methylideneamino]imidazole-4-carboxamide. It functions in the pathway amino-acid biosynthesis; L-histidine biosynthesis; L-histidine from 5-phospho-alpha-D-ribose 1-diphosphate: step 3/9. In terms of biological role, catalyzes the hydrolysis of the adenine ring of phosphoribosyl-AMP. The protein is Phosphoribosyl-AMP cyclohydrolase of Bacillus cereus (strain ATCC 10987 / NRS 248).